The sequence spans 424 residues: MAAVATCGSVAASTGSAVATASKSNVTSFQRRGPRASVTNDSGPRLVSIAGTRPSVRNGQLLVSTGLPALDQLLGGGLAVGTVLLIEEDKYNIYSPLLFKYFLAEGIVNGHTLLVASAKEDPANILQELPAPLLDDKCKKEFDEDVYNHKTPESNIKMKIAWRYQLLPKMEIGPVSSSRFGHYYDASKRMPQELIEASNWHGFFLPEKISSTLKVEPCSLTPGYTKLLQFIQNIIYEEGFDGSNPQKKQRNILRIGIQNLGSPLWGDDICCAENGGNSHSLTKFLYVLRGLLRTSLSACIITMPTHLIQNKAIIARVTTLSDVVVGLESFIGSERETNPLYKDYHGLIHIRQIPRLNNLICDESDVKDLAFKLKRKLFTIERLHLPPDLSDTVSRSSKMDLAESAKRLGPGCGMMAGGKKHLDF.

It belongs to the ELP4 family. As to quaternary structure, component of the elongator complex which consists of ELP1, ELP2, ELP3, ELP4, ELP5 and ELP6. Widely expressed.

Its subcellular location is the cytoplasm. The protein localises to the nucleus. The protein operates within tRNA modification; 5-methoxycarbonylmethyl-2-thiouridine-tRNA biosynthesis. In terms of biological role, component of the elongator complex which is required for multiple tRNA modifications, including mcm5U (5-methoxycarbonylmethyl uridine), mcm5s2U (5-methoxycarbonylmethyl-2-thiouridine), and ncm5U (5-carbamoylmethyl uridine). The elongator complex catalyzes the formation of carboxymethyluridine in the wobble base at position 34 in tRNAs. This is Elongator complex protein 4 (ELP4) from Homo sapiens (Human).